The sequence spans 192 residues: Pupal cuticle protein (192 aa).

The first 15 residues, 1–15, serve as a signal peptide directing secretion; sequence MHLLMSLFGVLAVMQ. A Chitin-binding type R&amp;R domain is found at 45–106; it reads DGNYRYAYET…PVGDHIPKVP (62 aa). Residues 149–163 show a composition bias toward polar residues; sequence QDQTTPRSRPSSTPK. A disordered region spans residues 149–192; the sequence is QDQTTPRSRPSSTPKTIYLTHPPTLSDAPTRRPLRQRQNDSRRR.

Its function is as follows. Component of the cuticle of the pupa of fruit fly. The polypeptide is Pupal cuticle protein (Pcp) (Drosophila pseudoobscura pseudoobscura (Fruit fly)).